The chain runs to 205 residues: Protein Nef (205 aa).

Glycine 2 is lipidated: N-myristoyl glycine; by host. Serine 6 bears the Phosphoserine; by host mark. The acidic; interacts with host PACS1 and PACS2; stabilizes the interaction of NEF/MHC-I with host AP1M1; necessary for MHC-I internalization stretch occupies residues 62–65; it reads EEEE. The SH3-binding; interaction with Src family tyrosine kinases stretch occupies residues 69-78; the sequence is PVRPQVPVRP. The PxxP; stabilizes the interaction of NEF/MHC-I with host AP1M1; necessary for MHC-I internalization motif lies at 72-75; that stretch reads PQVP. A mediates dimerization, Nef-PTE1 interaction region spans residues 108-124; the sequence is DTLDLWVYHTQGYFPDW. Residues 148–180 are binding to ATP6V1H; that stretch reads VDPEEVEKANEGENNCLLHPMSQHGMEDEDREV. Residues 164–165 carry the Dileucine internalization motif; necessary for CD4 internalization motif; that stretch reads LL. Positions 174 to 175 match the Diacidic; necessary for CD4 internalization motif; that stretch reads ED.

Belongs to the lentivirus primate group Nef protein family. Monomer; cytosolic form. Homodimer; membrane bound form. Interacts with Nef associated p21-activated kinase (PAK2); this interaction activates PAK2. Associates with the Nef-MHC-I-AP1 complex; this complex is required for MHC-I internalization. Interacts (via C-terminus) with host PI3-kinase. Interacts with host PACS1; this interaction seems to be weak. Interacts with host PACS2. Interacts with host LCK and MAPK3; these interactions inhibit the kinase activity of the latter. Interacts with host ATP6V1H; this interaction may play a role in CD4 endocytosis. Associates with the CD4-Nef-AP2 complex; this complex is required for CD4 internalization. Interacts with host AP2 subunit alpha and AP2 subunit sigma2. Interacts with TCR-zeta chain; this interaction up-regulates the Fas ligand (FasL) surface expression. Interacts with host HCK, LYN, and SRC; these interactions activate the Src family kinases. Interacts with MAP3K5; this interaction inhibits the Fas and TNFR-mediated death signals. Interacts with beta-COP and PTE1. Interacts with human RACK1; this increases Nef phosphorylation by PKC. Interacts with TP53; this interaction decreases the half-life of TP53, protecting the infected cell against p53-mediated apoptosis. The virion-associated Nef proteins are cleaved by the viral protease to release the soluble C-terminal core protein. Nef is probably cleaved concomitantly with viral structural proteins on maturation of virus particles. Post-translationally, myristoylated. In terms of processing, phosphorylated on serine residues, probably by host PKCdelta and theta.

The protein resides in the host cell membrane. Its subcellular location is the virion. The protein localises to the secreted. It is found in the host Golgi apparatus membrane. In terms of biological role, factor of infectivity and pathogenicity, required for optimal virus replication. Alters numerous pathways of T-lymphocyte function and down-regulates immunity surface molecules in order to evade host defense and increase viral infectivity. Alters the functionality of other immunity cells, like dendritic cells, monocytes/macrophages and NK cells. In infected CD4(+) T-lymphocytes, down-regulates the surface MHC-I, mature MHC-II, CD4, CD28, CCR5 and CXCR4 molecules. Mediates internalization and degradation of host CD4 through the interaction of with the cytoplasmic tail of CD4, the recruitment of AP-2 (clathrin adapter protein complex 2), internalization through clathrin coated pits, and subsequent transport to endosomes and lysosomes for degradation. Diverts host MHC-I molecules to the trans-Golgi network-associated endosomal compartments by an endocytic pathway to finally target them for degradation. MHC-I down-regulation may involve AP-1 (clathrin adapter protein complex 1) or possibly Src family kinase-ZAP70/Syk-PI3K cascade recruited by PACS2. In consequence infected cells are masked for immune recognition by cytotoxic T-lymphocytes. Decreasing the number of immune receptors also prevents reinfection by more HIV particles (superinfection). Down-regulates host SERINC3 and SERINC5 thereby excluding these proteins from the viral particles. Virion infectivity is drastically higher when SERINC3 or SERINC5 are excluded from the viral envelope, because these host antiviral proteins impair the membrane fusion event necessary for subsequent virion penetration. Its function is as follows. Bypasses host T-cell signaling by inducing a transcriptional program nearly identical to that of anti-CD3 cell activation. Interaction with TCR-zeta chain up-regulates the Fas ligand (FasL). Increasing surface FasL molecules and decreasing surface MHC-I molecules on infected CD4(+) cells send attacking cytotoxic CD8+ T-lymphocytes into apoptosis. Functionally, plays a role in optimizing the host cell environment for viral replication without causing cell death by apoptosis. Protects the infected cells from apoptosis in order to keep them alive until the next virus generation is ready to strike. Inhibits the Fas and TNFR-mediated death signals by blocking MAP3K5/ASK1. Decreases the half-life of TP53, protecting the infected cell against p53-mediated apoptosis. Inhibits the apoptotic signals regulated by the Bcl-2 family proteins through the formation of a Nef/PI3-kinase/PAK2 complex that leads to activation of PAK2 and induces phosphorylation of host BAD. In terms of biological role, extracellular Nef protein targets CD4(+) T-lymphocytes for apoptosis by interacting with CXCR4 surface receptors. The polypeptide is Protein Nef (Human immunodeficiency virus type 1 group M subtype F1 (isolate VI850) (HIV-1)).